Reading from the N-terminus, the 72-residue chain is Gas vesicle protein A (72 aa).

Belongs to the gas vesicle GvpA family. In terms of assembly, the gas vesicle shell is 2 nm thick and consists of a single layer of this protein. It forms helical ribs nearly perpendicular to the long axis of the vesicle.

The protein localises to the gas vesicle shell. In terms of biological role, gas vesicles are hollow, gas filled proteinaceous nanostructures found in some microorganisms. During planktonic growth they allow positioning of the organism at a favorable depth for light or nutrient acquisition. GvpA forms the protein shell. In Haloquadratum walsbyi (strain DSM 16790 / HBSQ001), this protein is Gas vesicle protein A.